Consider the following 364-residue polypeptide: Protein leg1b (364 aa).

The first 22 residues, 1–22 (MSEMGFLRSVAAVLLLAVFSHA), serve as a signal peptide directing secretion. N70 carries N-linked (GlcNAc...) asparagine glycosylation.

This sequence belongs to the LEG1 family. As to expression, detected in all tissues tested, with the highest levels in serum (at protein level). At mRNA level, only expressed in liver.

The protein localises to the secreted. Its function is as follows. Involved in early development of liver, exocrine pancreas and intestine, probably through cell cycle regulation. In liver, its function is partially redundant with leg1a function. This chain is Protein leg1b, found in Danio rerio (Zebrafish).